We begin with the raw amino-acid sequence, 642 residues long: Kinesin-like protein KIF12 (642 aa).

Residues 1-13 show a composition bias toward basic and acidic residues; that stretch reads MEERGSPDGDPAR. Residues 1–25 form a disordered region; it reads MEERGSPDGDPARNLEQGPEGSETP. Phosphoserine is present on S6. The region spanning 25–360 is the Kinesin motor domain; it reads PIQVVLRVRP…LRYASRAQRI (336 aa). Position 104–111 (104–111) interacts with ATP; that stretch reads GQTGSGKT. At S369 the chain carries Phosphoserine. Positions 376–465 form a coiled coil; sequence QQVENELLRL…QVHDLERRLL (90 aa). Disordered regions lie at residues 531–561 and 579–642; these read GHIS…SQSD and PSAP…LSSC. Positions 538-548 are enriched in pro residues; sequence WPPPWAPPPSP. Positions 610 to 642 are enriched in polar residues; sequence TLTQQINSSLHLSQRQPQPSEDTQSPGQGLSSC. S634 is modified (phosphoserine).

This sequence belongs to the TRAFAC class myosin-kinesin ATPase superfamily. Kinesin family. As to expression, expressed in the liver.

Its subcellular location is the cytoplasm. It localises to the cytoskeleton. The protein is Kinesin-like protein KIF12 (Kif12) of Mus musculus (Mouse).